The following is a 301-amino-acid chain: Formamidopyrimidine-DNA glycosylase (301 aa).

Catalysis depends on P2, which acts as the Schiff-base intermediate with DNA. The Proton donor role is filled by E3. Residue K58 is the Proton donor; for beta-elimination activity of the active site. Positions 109, 131, and 174 each coordinate DNA. Residues 265-301 (SVYDREGQACRTPGCGGTVARIVQAGRSTFYCATCQK) form an FPG-type zinc finger. Residue R291 is the Proton donor; for delta-elimination activity of the active site.

The protein belongs to the FPG family. Monomer. The cofactor is Zn(2+).

It catalyses the reaction Hydrolysis of DNA containing ring-opened 7-methylguanine residues, releasing 2,6-diamino-4-hydroxy-5-(N-methyl)formamidopyrimidine.. It carries out the reaction 2'-deoxyribonucleotide-(2'-deoxyribose 5'-phosphate)-2'-deoxyribonucleotide-DNA = a 3'-end 2'-deoxyribonucleotide-(2,3-dehydro-2,3-deoxyribose 5'-phosphate)-DNA + a 5'-end 5'-phospho-2'-deoxyribonucleoside-DNA + H(+). Involved in base excision repair of DNA damaged by oxidation or by mutagenic agents. Acts as a DNA glycosylase that recognizes and removes damaged bases. Has a preference for oxidized purines, such as 7,8-dihydro-8-oxoguanine (8-oxoG). Has AP (apurinic/apyrimidinic) lyase activity and introduces nicks in the DNA strand. Cleaves the DNA backbone by beta-delta elimination to generate a single-strand break at the site of the removed base with both 3'- and 5'-phosphates. In Rhizobium leguminosarum bv. trifolii (strain WSM2304), this protein is Formamidopyrimidine-DNA glycosylase.